A 148-amino-acid polypeptide reads, in one-letter code: Large ribosomal subunit protein uL15 (148 aa).

Positions 1-50 (MNLSNLKPAEGSTKTRKRIGRGPGSGLGGTSTRGHKGAKSRSGYSKKIGF) are disordered. Gly residues predominate over residues 21–31 (RGPGSGLGGTS).

Belongs to the universal ribosomal protein uL15 family. In terms of assembly, part of the 50S ribosomal subunit.

Functionally, binds to the 23S rRNA. In Bacteroides fragilis (strain ATCC 25285 / DSM 2151 / CCUG 4856 / JCM 11019 / LMG 10263 / NCTC 9343 / Onslow / VPI 2553 / EN-2), this protein is Large ribosomal subunit protein uL15.